The following is a 304-amino-acid chain: Mitochondrial glycine transporter (304 aa).

3 Solcar repeats span residues His25–Tyr114, Pro121–Ile205, and Leu215–Lys299. 6 consecutive transmembrane segments (helical) span residues Phe31 to Gln56, Gly89 to Phe115, Val127 to Glu152, Gly180 to Lys203, Thr219 to Met245, and Gly274 to Val292.

It belongs to the mitochondrial carrier (TC 2.A.29) family. SLC25A38 subfamily. Preferentially expressed in erythroid cells.

It localises to the mitochondrion inner membrane. The enzyme catalyses glycine(in) = glycine(out). Mitochondrial glycine transporter that imports glycine into the mitochondrial matrix. Plays an important role in providing glycine for the first enzymatic step in heme biosynthesis, the condensation of glycine with succinyl-CoA to produce 5-aminolevulinate (ALA) in the mitochondrial matrix. Required during erythropoiesis. Its function is as follows. Plays a role as pro-apoptotic protein that induces caspase-dependent apoptosis. In Homo sapiens (Human), this protein is Mitochondrial glycine transporter.